The chain runs to 374 residues: Alanine racemase (374 aa).

Lys34 acts as the Proton acceptor; specific for D-alanine in catalysis. N6-(pyridoxal phosphate)lysine is present on Lys34. Arg147 is a binding site for substrate. Residue Tyr271 is the Proton acceptor; specific for L-alanine of the active site. Residue Met319 coordinates substrate.

It belongs to the alanine racemase family. Pyridoxal 5'-phosphate serves as cofactor.

The catalysed reaction is L-alanine = D-alanine. Its pathway is amino-acid biosynthesis; D-alanine biosynthesis; D-alanine from L-alanine: step 1/1. Catalyzes the interconversion of L-alanine and D-alanine. May also act on other amino acids. This Haemophilus ducreyi (strain 35000HP / ATCC 700724) protein is Alanine racemase (alr).